The primary structure comprises 170 residues: Adenine phosphoribosyltransferase (170 aa).

Belongs to the purine/pyrimidine phosphoribosyltransferase family. As to quaternary structure, homodimer.

It is found in the cytoplasm. The catalysed reaction is AMP + diphosphate = 5-phospho-alpha-D-ribose 1-diphosphate + adenine. Its pathway is purine metabolism; AMP biosynthesis via salvage pathway; AMP from adenine: step 1/1. Functionally, catalyzes a salvage reaction resulting in the formation of AMP, that is energically less costly than de novo synthesis. The protein is Adenine phosphoribosyltransferase of Streptococcus sanguinis (strain SK36).